The primary structure comprises 1619 residues: Rap-GAP domain-containing protein DDB_G0281809 (1619 aa).

Disordered stretches follow at residues 128-249 (SMSN…TTPI), 289-316 (QQQQ…MPGS), 907-974 (SIGG…PYIN), and 1134-1153 (ISNN…TSNN). Low complexity-rich tracts occupy residues 130–204 (SNNN…SLSL) and 231–249 (QISA…TTPI). A coiled-coil region spans residues 265–295 (FNEVVQQQQQQQQQQQQQQQQQQQQQQQQQS). Low complexity-rich tracts occupy residues 916–926 (SGNSSQPSSTG) and 934–965 (SGSK…NGGS). The Rap-GAP domain occupies 1273 to 1494 (LNMLDSVSER…TNRKKLISDI (222 aa)). The interval 1554–1619 (IGTFTLPPPP…LSQSEDQSHK (66 aa)) is disordered. Positions 1559 to 1573 (LPPPPISPTISPQPS) are enriched in pro residues. Residues 1574 to 1590 (PHLSSSGGSWASSKGGS) are compositionally biased toward low complexity. Over residues 1591–1619 (TQPTTPSGRTSNFLSRRPNLSQSEDQSHK) the composition is skewed to polar residues.

The chain is Rap-GAP domain-containing protein DDB_G0281809 from Dictyostelium discoideum (Social amoeba).